The chain runs to 339 residues: Starvation-sensing protein RspB (339 aa).

Zn(2+) contacts are provided by C37, H59, C89, C92, C95, C103, and E144.

This sequence belongs to the zinc-containing alcohol dehydrogenase family. Requires Zn(2+) as cofactor.

In terms of biological role, not known; probable catabolic enzyme. In Escherichia coli (strain K12), this protein is Starvation-sensing protein RspB.